Consider the following 156-residue polypeptide: Bacterial microcompartment shell protein PduK (156 aa).

The BMC domain maps to 4 to 89 (SLGLLEVSGL…PGDGILSHSV (86 aa)). Residues 81-119 (GDGILSHSVTPESESEPAPAPTPVVPHEEIPEDHAAPEA) form a disordered region. Positions 106–116 (PHEEIPEDHAA) are enriched in basic and acidic residues.

Belongs to the bacterial microcompartments protein family. As to quaternary structure, interacts with shell protein PduA and assembly protein PduM. Interacts with PduP, probably with its first 18 residues. Fe cation is required as a cofactor.

It localises to the bacterial microcompartment. Its pathway is polyol metabolism; 1,2-propanediol degradation. In terms of biological role, a minor shell protein of the bacterial microcompartment (BMC) dedicated to 1,2-propanediol (1,2-PD) degradation. Expression of a cosmid containing the full 21-gene pdu operon in E.coli allows E.coli to grow on 1,2-propanediol (1,2-PD) with the appearance of bacterial microcompartments (BMC) in its cytoplasm. Overexpression of this protein leads to the appearance of a single large aggregate complex in the cytoplasm. Its function is as follows. The 1,2-PD-specific bacterial microcompartment (BMC) concentrates low levels of 1,2-PD catabolic enzymes, concentrates volatile reaction intermediates thus enhancing pathway flux and keeps the level of toxic, mutagenic propionaldehyde low. This Citrobacter freundii protein is Bacterial microcompartment shell protein PduK.